Reading from the N-terminus, the 280-residue chain is Large ribosomal subunit protein uL2 (280 aa).

Disordered stretches follow at residues 1 to 59 (MAIR…GGHK) and 223 to 280 (GVVM…NKKR). Composition is skewed to basic residues over residues 45-59 (VHGH…GGHK) and 269-280 (VRRRRSNKNKKR).

It belongs to the universal ribosomal protein uL2 family. As to quaternary structure, part of the 50S ribosomal subunit. Forms a bridge to the 30S subunit in the 70S ribosome.

Functionally, one of the primary rRNA binding proteins. Required for association of the 30S and 50S subunits to form the 70S ribosome, for tRNA binding and peptide bond formation. It has been suggested to have peptidyltransferase activity; this is somewhat controversial. Makes several contacts with the 16S rRNA in the 70S ribosome. The polypeptide is Large ribosomal subunit protein uL2 (Corynebacterium jeikeium (strain K411)).